The following is a 440-amino-acid chain: ATP-dependent protease ATPase subunit HslU (440 aa).

ATP is bound by residues V18, 60-65 (GVGKTE), D253, E318, and R390.

It belongs to the ClpX chaperone family. HslU subfamily. In terms of assembly, a double ring-shaped homohexamer of HslV is capped on each side by a ring-shaped HslU homohexamer. The assembly of the HslU/HslV complex is dependent on binding of ATP.

It is found in the cytoplasm. Its function is as follows. ATPase subunit of a proteasome-like degradation complex; this subunit has chaperone activity. The binding of ATP and its subsequent hydrolysis by HslU are essential for unfolding of protein substrates subsequently hydrolyzed by HslV. HslU recognizes the N-terminal part of its protein substrates and unfolds these before they are guided to HslV for hydrolysis. The protein is ATP-dependent protease ATPase subunit HslU of Methylococcus capsulatus (strain ATCC 33009 / NCIMB 11132 / Bath).